The primary structure comprises 307 residues: Pseudouridine-5'-phosphate glycosidase (307 aa).

The active-site Proton donor is the E28. 2 residues coordinate substrate: K89 and V109. D141 serves as a coordination point for Mn(2+). 143-145 (SAD) is a binding site for substrate. K162 functions as the Nucleophile in the catalytic mechanism.

It belongs to the pseudouridine-5'-phosphate glycosidase family. In terms of assembly, homotrimer. It depends on Mn(2+) as a cofactor.

It catalyses the reaction D-ribose 5-phosphate + uracil = psi-UMP + H2O. Functionally, catalyzes the reversible cleavage of pseudouridine 5'-phosphate (PsiMP) to ribose 5-phosphate and uracil. Functions biologically in the cleavage direction, as part of a pseudouridine degradation pathway. This chain is Pseudouridine-5'-phosphate glycosidase, found in Staphylococcus aureus (strain MW2).